A 156-amino-acid polypeptide reads, in one-letter code: Cellulose synthase operon protein D (156 aa).

It functions in the pathway glycan metabolism; bacterial cellulose biosynthesis. May have a major role in the perfection of crystallization, involved either in the pore structure itself or in the organization of the pores within the linear array of terminal synthesizing complexes (TCs). This is Cellulose synthase operon protein D (bcsDI) from Komagataeibacter xylinus (Gluconacetobacter xylinus).